A 319-amino-acid polypeptide reads, in one-letter code: Acetyl-coenzyme A carboxylase carboxyl transferase subunit alpha (319 aa).

The CoA carboxyltransferase C-terminal domain maps to 35 to 296; sequence NIDEEVHRLR…KAQLLEDLAD (262 aa).

It belongs to the AccA family. As to quaternary structure, acetyl-CoA carboxylase is a heterohexamer composed of biotin carboxyl carrier protein (AccB), biotin carboxylase (AccC) and two subunits each of ACCase subunit alpha (AccA) and ACCase subunit beta (AccD).

It is found in the cytoplasm. The catalysed reaction is N(6)-carboxybiotinyl-L-lysyl-[protein] + acetyl-CoA = N(6)-biotinyl-L-lysyl-[protein] + malonyl-CoA. It participates in lipid metabolism; malonyl-CoA biosynthesis; malonyl-CoA from acetyl-CoA: step 1/1. Functionally, component of the acetyl coenzyme A carboxylase (ACC) complex. First, biotin carboxylase catalyzes the carboxylation of biotin on its carrier protein (BCCP) and then the CO(2) group is transferred by the carboxyltransferase to acetyl-CoA to form malonyl-CoA. The protein is Acetyl-coenzyme A carboxylase carboxyl transferase subunit alpha of Salmonella arizonae (strain ATCC BAA-731 / CDC346-86 / RSK2980).